Here is a 261-residue protein sequence, read N- to C-terminus: UPF0246 protein Daci_5283 (261 aa).

This sequence belongs to the UPF0246 family.

The protein is UPF0246 protein Daci_5283 of Delftia acidovorans (strain DSM 14801 / SPH-1).